A 202-amino-acid polypeptide reads, in one-letter code: Small ribosomal subunit protein uS4 (202 aa).

A compositionally biased stretch (basic residues) spans 1–13; the sequence is MSRYRGPRLRVTR. The tract at residues 1-42 is disordered; sequence MSRYRGPRLRVTRRLGELPGLTRKASKKSNPPGQHGQARRKR. An S4 RNA-binding domain is found at 90 to 152; it reads NRLDNVCFRL…KASKKLVEGN (63 aa).

It belongs to the universal ribosomal protein uS4 family. Part of the 30S ribosomal subunit. Contacts protein S5. The interaction surface between S4 and S5 is involved in control of translational fidelity.

Its function is as follows. One of the primary rRNA binding proteins, it binds directly to 16S rRNA where it nucleates assembly of the body of the 30S subunit. With S5 and S12 plays an important role in translational accuracy. The sequence is that of Small ribosomal subunit protein uS4 from Prochlorococcus marinus (strain MIT 9515).